Reading from the N-terminus, the 92-residue chain is MANSAQARKRARQAAKANSHNSALRSKFRTAIKAVRKAIDAGDQAKAAELFKAATKTIDTIADKKIVHKNKAARHKSRLSAAVKGLQAQAAQ.

A disordered region spans residues 1 to 25; that stretch reads MANSAQARKRARQAAKANSHNSALR.

It belongs to the bacterial ribosomal protein bS20 family.

Its function is as follows. Binds directly to 16S ribosomal RNA. The sequence is that of Small ribosomal subunit protein bS20 from Burkholderia mallei (strain NCTC 10247).